The chain runs to 370 residues: tRNA pseudouridine synthase D (370 aa).

Asp-77 functions as the Nucleophile in the catalytic mechanism. One can recognise a TRUD domain in the interval 152–297 (GVPNYFGEQR…LEQERRPLLL (146 aa)).

The protein belongs to the pseudouridine synthase TruD family.

The enzyme catalyses uridine(13) in tRNA = pseudouridine(13) in tRNA. Functionally, responsible for synthesis of pseudouridine from uracil-13 in transfer RNAs. This Shewanella oneidensis (strain ATCC 700550 / JCM 31522 / CIP 106686 / LMG 19005 / NCIMB 14063 / MR-1) protein is tRNA pseudouridine synthase D.